The chain runs to 474 residues: NADH-ubiquinone oxidoreductase chain 4 (474 aa).

The next 13 membrane-spanning stretches (helical) occupy residues 34–54, 86–106, 115–135, 137–157, 167–187, 211–231, 242–262, 276–295, 302–322, 325–345, 373–393, 405–425, and 454–474; these read SFFL…DLMF, LYGL…ISTV, LKFY…IKCS, LIAF…VVFF, AVIY…LACL, AMTI…IWPL, ASTG…LFGF, TFFL…NMWS, LVAY…LKGD, LIAY…LMFF, ALAI…LKFV, VSWP…LIGF, and YIIF…FLMI.

This sequence belongs to the complex I subunit 4 family.

It is found in the mitochondrion membrane. The catalysed reaction is a ubiquinone + NADH + 5 H(+)(in) = a ubiquinol + NAD(+) + 4 H(+)(out). Core subunit of the mitochondrial membrane respiratory chain NADH dehydrogenase (Complex I) that is believed to belong to the minimal assembly required for catalysis. Complex I functions in the transfer of electrons from NADH to the respiratory chain. The immediate electron acceptor for the enzyme is believed to be ubiquinone. This is NADH-ubiquinone oxidoreductase chain 4 (ND4) from Paramecium tetraurelia.